The primary structure comprises 167 residues: Endoribonuclease YbeY (167 aa).

Residues H126, H130, and H136 each coordinate Zn(2+).

This sequence belongs to the endoribonuclease YbeY family. The cofactor is Zn(2+).

Its subcellular location is the cytoplasm. Its function is as follows. Single strand-specific metallo-endoribonuclease involved in late-stage 70S ribosome quality control and in maturation of the 3' terminus of the 16S rRNA. This Novosphingobium aromaticivorans (strain ATCC 700278 / DSM 12444 / CCUG 56034 / CIP 105152 / NBRC 16084 / F199) protein is Endoribonuclease YbeY.